Reading from the N-terminus, the 279-residue chain is Ribonuclease Z (279 aa).

The Zn(2+) site is built by His64, His66, Asp68, His69, His134, Asp191, and His245. Catalysis depends on Asp68, which acts as the Proton acceptor.

It belongs to the RNase Z family. Homodimer. Zn(2+) is required as a cofactor.

The catalysed reaction is Endonucleolytic cleavage of RNA, removing extra 3' nucleotides from tRNA precursor, generating 3' termini of tRNAs. A 3'-hydroxy group is left at the tRNA terminus and a 5'-phosphoryl group is left at the trailer molecule.. Its function is as follows. Zinc phosphodiesterase, which displays some tRNA 3'-processing endonuclease activity. Probably involved in tRNA maturation, by removing a 3'-trailer from precursor tRNA. The chain is Ribonuclease Z from Methanopyrus kandleri (strain AV19 / DSM 6324 / JCM 9639 / NBRC 100938).